A 422-amino-acid polypeptide reads, in one-letter code: GTPase Obg (422 aa).

Positions 1–156 (MKFIDEVNVL…FALRLVLKVL (156 aa)) constitute an Obg domain. Positions 157–324 (ADVGLVGKPS…LKAAIFKMLE (168 aa)) constitute an OBG-type G domain. GTP contacts are provided by residues 163–170 (GKPSAGKS), 188–192 (FTTLV), 209–212 (DLPG), 278–281 (NKSD), and 305–307 (SAL). 2 residues coordinate Mg(2+): Ser170 and Thr190. The OCT domain occupies 342-420 (NITLDRDALK…IGNFEFDWSD (79 aa)).

This sequence belongs to the TRAFAC class OBG-HflX-like GTPase superfamily. OBG GTPase family. Monomer. Requires Mg(2+) as cofactor.

The protein resides in the cytoplasm. Its function is as follows. An essential GTPase which binds GTP, GDP and possibly (p)ppGpp with moderate affinity, with high nucleotide exchange rates and a fairly low GTP hydrolysis rate. Plays a role in control of the cell cycle, stress response, ribosome biogenesis and in those bacteria that undergo differentiation, in morphogenesis control. The chain is GTPase Obg from Metamycoplasma arthritidis (strain 158L3-1) (Mycoplasma arthritidis).